Consider the following 521-residue polypeptide: Ankyrin repeat domain-containing protein 34B (521 aa).

ANK repeat units lie at residues 9 to 38, 42 to 79, 83 to 113, and 117 to 146; these read TESN…YINE, RGET…DPNI, FGKT…DPSL, and TGFS…AKGK. A disordered region spans residues 161–188; sequence QTTRQYLNVPPSPGIEGNNSPSPCTSPS. Residues 177-188 show a composition bias toward polar residues; sequence GNNSPSPCTSPS.

This sequence belongs to the ANKRD34 family.

It is found in the cytoplasm. The protein resides in the nucleus. The sequence is that of Ankyrin repeat domain-containing protein 34B (ankrd34b) from Xenopus laevis (African clawed frog).